The chain runs to 1368 residues: DNA-directed RNA polymerase subunit beta (1368 aa).

The protein belongs to the RNA polymerase beta chain family. As to quaternary structure, the RNAP catalytic core consists of 2 alpha, 1 beta, 1 beta' and 1 omega subunit. When a sigma factor is associated with the core the holoenzyme is formed, which can initiate transcription.

It catalyses the reaction RNA(n) + a ribonucleoside 5'-triphosphate = RNA(n+1) + diphosphate. In terms of biological role, DNA-dependent RNA polymerase catalyzes the transcription of DNA into RNA using the four ribonucleoside triphosphates as substrates. The protein is DNA-directed RNA polymerase subunit beta of Cupriavidus necator (strain ATCC 17699 / DSM 428 / KCTC 22496 / NCIMB 10442 / H16 / Stanier 337) (Ralstonia eutropha).